The following is a 324-amino-acid chain: Glutathione synthetase (324 aa).

The ATP-grasp domain maps to 124–309 (KLAIAQFREF…VAGMFIDALE (186 aa)). 150–206 (HAEQGDVIFKPLDGMGGAGIFRVGADGMNLGSVIETLTHNGTRTVMAQQYIPAIRDG) serves as a coordination point for ATP. Mg(2+) is bound by residues Glu-280 and Asn-282.

It belongs to the prokaryotic GSH synthase family. The cofactor is Mg(2+). Mn(2+) serves as cofactor.

It carries out the reaction gamma-L-glutamyl-L-cysteine + glycine + ATP = glutathione + ADP + phosphate + H(+). The protein operates within sulfur metabolism; glutathione biosynthesis; glutathione from L-cysteine and L-glutamate: step 2/2. This is Glutathione synthetase from Ralstonia nicotianae (strain ATCC BAA-1114 / GMI1000) (Ralstonia solanacearum).